The primary structure comprises 234 residues: Gem-associated protein 8 (234 aa).

A disordered region spans residues 60-116 (LAQSPAAKGGTSPKSRSKSPSASGDACRRRSRPGKPGPQRRSTEKPARFAEDNDSES). Residues 67-83 (KGGTSPKSRSKSPSASG) are compositionally biased toward low complexity. Basic and acidic residues predominate over residues 100–110 (RSTEKPARFAE). Residues 130–153 (ITDELRQYFAETEQHREELRRQHQ) are a coiled coil.

As to quaternary structure, part of the core SMN complex that contains SMN1, GEMIN2/SIP1, DDX20/GEMIN3, GEMIN4, GEMIN5, GEMIN6, GEMIN7, GEMIN8 and STRAP/UNRIP. Part of the SMN-Sm complex that contains SMN1, GEMIN2/SIP1, DDX20/GEMIN3, GEMIN4, GEMIN5, GEMIN6, GEMIN7, GEMIN8, STRAP/UNRIP and the Sm proteins SNRPB, SNRPD1, SNRPD2, SNRPD3, SNRPE, SNRPF and SNRPG. Interacts with GEMIN6; the interaction is direct. Interacts with GEMIN7; the interaction is direct. Interacts with SMN1; the interaction is direct. Interacts with GEMIN4; the interaction is direct.

The protein resides in the nucleus. It localises to the gem. It is found in the cytoplasm. The SMN complex catalyzes the assembly of small nuclear ribonucleoproteins (snRNPs), the building blocks of the spliceosome, and thereby plays an important role in the splicing of cellular pre-mRNAs. Most spliceosomal snRNPs contain a common set of Sm proteins SNRPB, SNRPD1, SNRPD2, SNRPD3, SNRPE, SNRPF and SNRPG that assemble in a heptameric protein ring on the Sm site of the small nuclear RNA to form the core snRNP (Sm core). In the cytosol, the Sm proteins SNRPD1, SNRPD2, SNRPE, SNRPF and SNRPG are trapped in an inactive 6S pICln-Sm complex by the chaperone CLNS1A that controls the assembly of the core snRNP. To assemble core snRNPs, the SMN complex accepts the trapped 5Sm proteins from CLNS1A forming an intermediate. Binding of snRNA inside 5Sm triggers eviction of the SMN complex, thereby allowing binding of SNRPD3 and SNRPB to complete assembly of the core snRNP. The sequence is that of Gem-associated protein 8 (GEMIN8) from Bos taurus (Bovine).